Here is a 231-residue protein sequence, read N- to C-terminus: Small ribosomal subunit protein uS5 (231 aa).

The interval 1-63 (MADLENKTVK…KSVDRANKVK (63 aa)) is disordered. The span at 29-60 (KRTESGAKKQIWEKRSAHDSKDMPKKSVDRAN) shows a compositional bias: basic and acidic residues. An S5 DRBM domain is found at 75 to 138 (FSEKVVNISR…KDARNHLISV (64 aa)).

The protein belongs to the universal ribosomal protein uS5 family. Part of the 30S ribosomal subunit. Contacts proteins S4 and S8.

With S4 and S12 plays an important role in translational accuracy. In terms of biological role, located at the back of the 30S subunit body where it stabilizes the conformation of the head with respect to the body. This Mycoplasmopsis agalactiae (strain NCTC 10123 / CIP 59.7 / PG2) (Mycoplasma agalactiae) protein is Small ribosomal subunit protein uS5.